Consider the following 383-residue polypeptide: ATP phosphoribosyltransferase regulatory subunit (383 aa).

This sequence belongs to the class-II aminoacyl-tRNA synthetase family. HisZ subfamily. As to quaternary structure, heteromultimer composed of HisG and HisZ subunits.

It is found in the cytoplasm. It functions in the pathway amino-acid biosynthesis; L-histidine biosynthesis; L-histidine from 5-phospho-alpha-D-ribose 1-diphosphate: step 1/9. Required for the first step of histidine biosynthesis. May allow the feedback regulation of ATP phosphoribosyltransferase activity by histidine. The protein is ATP phosphoribosyltransferase regulatory subunit of Neisseria meningitidis serogroup C / serotype 2a (strain ATCC 700532 / DSM 15464 / FAM18).